The primary structure comprises 1307 residues: TBC1 domain family member 4 (1307 aa).

Met-1 is modified (N-acetylmethionine). Residues 1-30 are disordered; sequence MESPSCIQDEPFPHPLEPEPSAPAQPGATK. Positions 13–23 are enriched in pro residues; the sequence is PHPLEPEPSAP. Positions 53 to 209 constitute a PID 1 domain; it reads PMLPWLMAEI…QKFEVLYCGR (157 aa). The segment covering 237–246 has biased composition (basic and acidic residues); it reads LKLQGERGGD. The tract at residues 237-276 is disordered; the sequence is LKLQGERGGDPGDEMGVLEVESPVSPDDSLPEKADGTVNS. Residues Ser-258, Ser-261, and Ser-320 each carry the phosphoserine modification. Positions 319-475 constitute a PID 2 domain; that stretch reads RSRCSSVTGV…HSLHKLCERI (157 aa). Phosphoserine; by PKB/AKT1 occurs at positions 324 and 348. Positions 330–360 are disordered; that stretch reads QKKVHENNQKTQPRRRHASAPSHVQPSDSEK. Ser-351 is modified (phosphoserine). Lys-484 carries the N6-acetyllysine modification. Phosphoserine is present on Ser-573. Thr-575 is subject to Phosphothreonine. Ser-577 carries the phosphoserine; by PKB/AKT1 modification. Residue Arg-584 is modified to Omega-N-methylarginine. Phosphoserine; by PKB/AKT1 is present on Ser-595. A phosphoserine mark is found at Ser-598 and Ser-616. Disordered stretches follow at residues 603-684 and 732-774; these read NSLA…SEQC and SPQY…PVTP. Pro residues predominate over residues 615-624; it reads DSPPGTPPAS. Phosphothreonine is present on Thr-620. Ser-624 carries the post-translational modification Phosphoserine. A Phosphothreonine; by PKB/AKT1 modification is found at Thr-649. A Phosphoserine modification is found at Ser-673. Over residues 757–767 the composition is skewed to polar residues; sequence SSTCSNESLNA. Ser-758 is modified (phosphoserine; by PKB/AKT1). Residues Ser-761 and Ser-764 each carry the phosphoserine modification. Thr-770 bears the Phosphothreonine mark. Positions 927 to 1121 constitute a Rab-GAP TBC domain; it reads GVPKSRRGEI…RVFDIIFLQG (195 aa).

Phosphorylated by AKT1; insulin-induced. Also phosphorylated by AMPK in response to insulin. Insulin-stimulated phosphorylation is required for SLC2A4/GLUT4 translocation. Has no effect on SLC2A4/GLUT4 internalization. Widely expressed, including in pancreatic beta cells.

Its subcellular location is the cytoplasm. May act as a GTPase-activating protein for RAB2A, RAB8A, RAB10 and RAB14. Promotes insulin-induced glucose transporter SLC2A4/GLUT4 translocation at the plasma membrane, thus increasing glucose uptake. This Mus musculus (Mouse) protein is TBC1 domain family member 4 (Tbc1d4).